We begin with the raw amino-acid sequence, 67 residues long: DNA-directed RNA polymerase subunit omega (67 aa).

It belongs to the RNA polymerase subunit omega family. In terms of assembly, the RNAP catalytic core consists of 2 alpha, 1 beta, 1 beta' and 1 omega subunit. When a sigma factor is associated with the core the holoenzyme is formed, which can initiate transcription.

It carries out the reaction RNA(n) + a ribonucleoside 5'-triphosphate = RNA(n+1) + diphosphate. In terms of biological role, promotes RNA polymerase assembly. Latches the N- and C-terminal regions of the beta' subunit thereby facilitating its interaction with the beta and alpha subunits. This is DNA-directed RNA polymerase subunit omega from Bordetella avium (strain 197N).